We begin with the raw amino-acid sequence, 495 residues long: MLEHFCECYSNLSGLILCPVLGSITPLFIPNSRIRPIRLIGLCASLITFLYSPVPRIQFDSSTAKSQFVESLRWLPYENINFYLGIDGISLFFVILTTFLIPICISVGWSGMRSYGKEYITAFLIREFLMIAVFRMLDLLLFYVFPESVPIPMFIIIGVWGSRQRKIKAAYQFFLYTLLGSLFMLLAILLILFQTGTTDLQISLTTEFSERRQIFLWIASFASFAVKVPMVPVHIWLPEAHVEAPTAGSVILAGIPLKFGTHGFLRFSIPMFPEATLCSTPFIYTLSAIAIIYTSLTTSRQIDLKKIIAYSSVAHMNLVTIGMFSPNIQGIGGSILPMLSHGLVPSALFLCVGVLYDRHKTRLVRYYGGLVSTMPNLSTIFFSFTLANMSSPGTSSFIGEFPILVGAFQRNSLVATLAALGMILGAAYSLWLYNRVVSGNLKPDFLHKFSDSNGREVSIFIPFLVGLVRMGVHPKVFPDCMHTSVSNLVQHGKFH.

11 helical membrane passes run 9 to 29 (YSNL…PLFI), 39 to 59 (LIGL…RIQF), 89 to 109 (ISLF…SVGW), 139 to 159 (LLLF…IIGV), 173 to 193 (FFLY…LILF), 214 to 234 (IFLW…VPVH), 272 to 292 (FPEA…IAII), 313 to 333 (VAHM…GIGG), 335 to 355 (ILPM…VGVL), 367 to 387 (YGGL…FTLA), and 413 to 433 (LVAT…LWLY).

Belongs to the complex I subunit 4 family.

Its subcellular location is the mitochondrion membrane. The enzyme catalyses a ubiquinone + NADH + 5 H(+)(in) = a ubiquinol + NAD(+) + 4 H(+)(out). Its function is as follows. Core subunit of the mitochondrial membrane respiratory chain NADH dehydrogenase (Complex I) that is believed to belong to the minimal assembly required for catalysis. Complex I functions in the transfer of electrons from NADH to the respiratory chain. The immediate electron acceptor for the enzyme is believed to be ubiquinone. The chain is NADH-ubiquinone oxidoreductase chain 4 (ND4) from Brassica campestris (Field mustard).